The primary structure comprises 213 residues: Ribosome maturation factor RimM (213 aa).

Residues 99–175 form the PRC barrel domain; it reads DQDAAYISDL…RITMRLPEGL (77 aa). The segment at 182 to 213 is disordered; the sequence is TATAREPRARRTRKRGLRKPITGADATPPDSQ. Over residues 189–199 the composition is skewed to basic residues; it reads RARRTRKRGLR.

This sequence belongs to the RimM family. In terms of assembly, binds ribosomal protein uS19.

It localises to the cytoplasm. Its function is as follows. An accessory protein needed during the final step in the assembly of 30S ribosomal subunit, possibly for assembly of the head region. Essential for efficient processing of 16S rRNA. May be needed both before and after RbfA during the maturation of 16S rRNA. It has affinity for free ribosomal 30S subunits but not for 70S ribosomes. This is Ribosome maturation factor RimM from Acidobacterium capsulatum (strain ATCC 51196 / DSM 11244 / BCRC 80197 / JCM 7670 / NBRC 15755 / NCIMB 13165 / 161).